Consider the following 92-residue polypeptide: UPF0358 protein SH1840 (92 aa).

The protein belongs to the UPF0358 family.

The polypeptide is UPF0358 protein SH1840 (Staphylococcus haemolyticus (strain JCSC1435)).